The following is a 349-amino-acid chain: Protein-glutamate methylesterase/protein-glutamine glutaminase 3 (349 aa).

Residues 2–119 (DVLIVDDSPV…HPDFERDVES (118 aa)) enclose the Response regulatory domain. Asp52 carries the 4-aspartylphosphate modification. In terms of domain architecture, CheB-type methylesterase spans 157–340 (EGFQPGVIAI…LSPPRIAALL (184 aa)). Catalysis depends on residues Ser169, His196, and Asp289.

This sequence belongs to the CheB family. Phosphorylated by CheA. Phosphorylation of the N-terminal regulatory domain activates the methylesterase activity.

It localises to the cytoplasm. It catalyses the reaction [protein]-L-glutamate 5-O-methyl ester + H2O = L-glutamyl-[protein] + methanol + H(+). The enzyme catalyses L-glutaminyl-[protein] + H2O = L-glutamyl-[protein] + NH4(+). Involved in chemotaxis. Part of a chemotaxis signal transduction system that modulates chemotaxis in response to various stimuli. Catalyzes the demethylation of specific methylglutamate residues introduced into the chemoreceptors (methyl-accepting chemotaxis proteins or MCP) by CheR. Also mediates the irreversible deamidation of specific glutamine residues to glutamic acid. In Hahella chejuensis (strain KCTC 2396), this protein is Protein-glutamate methylesterase/protein-glutamine glutaminase 3.